The primary structure comprises 84 residues: Transcriptional regulator WhiB1 (84 aa).

The 63-residue stretch at 8 to 70 (VCRDEDPELF…GGMSEDERRA (63 aa)) folds into the 4Fe-4S Wbl-type domain. Positions 9, 37, 40, and 46 each coordinate [4Fe-4S] cluster.

It belongs to the WhiB family. As to quaternary structure, homodimer. [4Fe-4S] cluster is required as a cofactor. Post-translationally, the Fe-S cluster can be nitrosylated by nitric oxide (NO). In terms of processing, upon Fe-S cluster removal intramolecular disulfide bonds are formed.

The protein resides in the cytoplasm. In terms of biological role, acts as a transcriptional regulator. Probably redox-responsive. The apo- but not holo-form probably binds DNA. The chain is Transcriptional regulator WhiB1 (whiB1) from Mycobacterium tuberculosis (strain CDC 1551 / Oshkosh).